Reading from the N-terminus, the 117-residue chain is MTRTRRGYIARRRRTKIRLFTSSFRGAHSRLTRTITQQKIRALVSTHRDRDRQKRDFRRLWITRINAVIHENGASYSYSRFIHDLYKRQLLLNRKILAQIAISNRNCLYMISNEIIK.

It belongs to the bacterial ribosomal protein bL20 family.

It localises to the plastid. The protein resides in the chloroplast. Functionally, binds directly to 23S ribosomal RNA and is necessary for the in vitro assembly process of the 50S ribosomal subunit. It is not involved in the protein synthesizing functions of that subunit. In Vitis vinifera (Grape), this protein is Large ribosomal subunit protein bL20c.